The chain runs to 250 residues: Vitamin B12 import ATP-binding protein BtuD (250 aa).

One can recognise an ABC transporter domain in the interval 3–233 (LRQASVLPRL…EVLSPVFGVA (231 aa)). Residue 29-36 (GPNGAGKS) participates in ATP binding.

This sequence belongs to the ABC transporter superfamily. Vitamin B12 importer (TC 3.A.1.13.1) family. In terms of assembly, the complex is composed of two ATP-binding proteins (BtuD), two transmembrane proteins (BtuC) and a solute-binding protein (BtuF).

Its subcellular location is the cell inner membrane. It carries out the reaction an R-cob(III)alamin(out) + ATP + H2O = an R-cob(III)alamin(in) + ADP + phosphate + H(+). Its function is as follows. Part of the ABC transporter complex BtuCDF involved in vitamin B12 import. Responsible for energy coupling to the transport system. The protein is Vitamin B12 import ATP-binding protein BtuD of Pectobacterium atrosepticum (strain SCRI 1043 / ATCC BAA-672) (Erwinia carotovora subsp. atroseptica).